We begin with the raw amino-acid sequence, 388 residues long: MIKTITSLRKTLVLPLHLHIRTLQTFAKYNAQAASALREERKKPLYQNGDDVYADLDWDNLGFGLNPADYMYVMKCSKDGEFTQGELSPYGNIQLSPSAGVLNYGQAIYEGTKAYRKENGKLLLFRPDHNAIRMKLGAERMLMPSPSVDQFVNAVKQTALANKRWVPPAGKGTLYIRPLLMGSGPILGLGPAPEYTFIVYASPVGNYFKEGMAALNLYVEEEYVRAAPGGAGGVKSITNYAPVLKALSRAKSRGFSDVLYLDSVKKKYLEEASSCNVFVVKGRTISTPATNGTILEGITRKSVMEIASDQGYQVVEKAVHVDEVMDADEVFCTGTAVVVAPVGTITYQEKRVEYKTGDESVCQKLRSVLVGIQTGLIEDNKGWVTDIN.

The N-terminal 22 residues, 1–22 (MIKTITSLRKTLVLPLHLHIRT), are a transit peptide targeting the chloroplast. The residue at position 235 (K235) is an N6-(pyridoxal phosphate)lysine.

Belongs to the class-IV pyridoxal-phosphate-dependent aminotransferase family. It depends on pyridoxal 5'-phosphate as a cofactor.

The protein localises to the plastid. The protein resides in the chloroplast. It carries out the reaction L-leucine + 2-oxoglutarate = 4-methyl-2-oxopentanoate + L-glutamate. It catalyses the reaction L-isoleucine + 2-oxoglutarate = (S)-3-methyl-2-oxopentanoate + L-glutamate. The enzyme catalyses L-valine + 2-oxoglutarate = 3-methyl-2-oxobutanoate + L-glutamate. It functions in the pathway amino-acid biosynthesis; L-isoleucine biosynthesis; L-isoleucine from 2-oxobutanoate: step 4/4. Its pathway is amino-acid biosynthesis; L-leucine biosynthesis; L-leucine from 3-methyl-2-oxobutanoate: step 4/4. It participates in amino-acid biosynthesis; L-valine biosynthesis; L-valine from pyruvate: step 4/4. Its function is as follows. Converts 2-oxo acids to branched-chain amino acids. Shows activity with L-Leu, L-Ile and L-Val as amino donors and 2-oxoglutarate as an amino acceptor, but no activity for D-isomers of Leu, Ile, Val, Asp, Glu or Ala. This chain is Branched-chain-amino-acid aminotransferase 2, chloroplastic (BCAT2), found in Arabidopsis thaliana (Mouse-ear cress).